We begin with the raw amino-acid sequence, 443 residues long: Glutamate-1-semialdehyde 2,1-aminomutase (443 aa).

Lys-277 carries the post-translational modification N6-(pyridoxal phosphate)lysine.

Belongs to the class-III pyridoxal-phosphate-dependent aminotransferase family. HemL subfamily. As to quaternary structure, homodimer. Pyridoxal 5'-phosphate is required as a cofactor.

It localises to the cytoplasm. It catalyses the reaction (S)-4-amino-5-oxopentanoate = 5-aminolevulinate. The protein operates within porphyrin-containing compound metabolism; protoporphyrin-IX biosynthesis; 5-aminolevulinate from L-glutamyl-tRNA(Glu): step 2/2. This Pseudarthrobacter chlorophenolicus (strain ATCC 700700 / DSM 12829 / CIP 107037 / JCM 12360 / KCTC 9906 / NCIMB 13794 / A6) (Arthrobacter chlorophenolicus) protein is Glutamate-1-semialdehyde 2,1-aminomutase.